Here is a 61-residue protein sequence, read N- to C-terminus: Large ribosomal subunit protein bL28 (61 aa).

Belongs to the bacterial ribosomal protein bL28 family.

This is Large ribosomal subunit protein bL28 from Nautilia profundicola (strain ATCC BAA-1463 / DSM 18972 / AmH).